We begin with the raw amino-acid sequence, 202 residues long: Na(+)-translocating NADH-quinone reductase subunit E (202 aa).

The next 6 helical transmembrane spans lie at Ser-11–Val-31, Met-39–Val-59, Leu-79–Glu-99, Gly-114–Val-134, Ile-144–Val-164, and Leu-180–Val-200.

It belongs to the NqrDE/RnfAE family. In terms of assembly, composed of six subunits; NqrA, NqrB, NqrC, NqrD, NqrE and NqrF.

The protein localises to the cell inner membrane. The catalysed reaction is a ubiquinone + n Na(+)(in) + NADH + H(+) = a ubiquinol + n Na(+)(out) + NAD(+). Its function is as follows. NQR complex catalyzes the reduction of ubiquinone-1 to ubiquinol by two successive reactions, coupled with the transport of Na(+) ions from the cytoplasm to the periplasm. NqrA to NqrE are probably involved in the second step, the conversion of ubisemiquinone to ubiquinol. This chain is Na(+)-translocating NADH-quinone reductase subunit E, found in Pseudoalteromonas atlantica (strain T6c / ATCC BAA-1087).